The sequence spans 864 residues: Mitochondrial 15S rRNA processing factor CCM1 (864 aa).

The transit peptide at 1-76 (MYMARCGPKN…REFSNTLKER (76 aa)) directs the protein to the mitochondrion. Polar residues-rich tracts occupy residues 80–94 (TKSV…NSIA) and 102–112 (NVNVTKTSSVP). Residues 80–117 (TKSVNSDGHQSNSIAPISEDSRNVNVTKTSSVPNEEKS) form a disordered region. PPR repeat units lie at residues 319 to 353 (NKQN…STKH) and 356 to 390 (DICT…NIKP).

The protein belongs to the CCM1 family. As to quaternary structure, binds to mitochondrial small subunit 15S rRNA.

The protein resides in the mitochondrion. Regulates mitochondrial small subunit maturation by controlling 15S rRNA 5'-end processing. Localizes to the 5' precursor of the 15S rRNA in a position that is subsequently occupied by mS47 in the mature yeast mtSSU. Uses structure and sequence-specific RNA recognition, binding to a single-stranded region of the precursor and specifically recognizing bases -6 to -1. The exchange of Ccm1 for mS47 is coupled to the irreversible removal of precursor rRNA that is accompanied by conformational changes of the mitoribosomal proteins uS5m and mS26. These conformational changes signal completion of 5'-end rRNA processing through protection of the mature 5'-end of the 15S rRNA and stabilization of mS47. The removal of the 5' precursor together with the dissociation of Ccm1 may be catalyzed by the 5'-3' exoribonuclease Pet127. Involved in the specific removal of group I introns in mitochondrial encoded transcripts. This is Mitochondrial 15S rRNA processing factor CCM1 from Saccharomyces cerevisiae (strain ATCC 204508 / S288c) (Baker's yeast).